A 393-amino-acid chain; its full sequence is Beta-1,4-galactosyltransferase 3 (393 aa).

Residues 1 to 10 lie on the Cytoplasmic side of the membrane; that stretch reads MLRRLLERPC. The helical; Signal-anchor for type II membrane protein transmembrane segment at 11-31 threads the bilayer; it reads TLALLVGSQLAVMMYLSLGGF. Residues 32-393 are Lumenal-facing; sequence RSLSALFGRD…ANHTALRGSH (362 aa). Asn-57 carries N-linked (GlcNAc...) asparagine glycosylation. The cysteines at positions 77 and 119 are disulfide-linked. 130–134 is a binding site for UDP-alpha-D-galactose; that stretch reads PHRAR. N-linked (GlcNAc...) asparagine glycosylation is present at Asn-166. UDP-alpha-D-galactose is bound by residues 169–171, 196–197, Tyr-226, and Trp-258; these read FNR and VD. The cysteines at positions 190 and 209 are disulfide-linked. Asp-197 contacts Mn(2+). 260–263 is an N-acetyl-D-glucosamine binding site; sequence GEDD. His-291 contributes to the Mn(2+) binding site. 291-293 lines the UDP-alpha-D-galactose pocket; that stretch reads HRG. Arg-303 contributes to the N-acetyl-D-glucosamine binding site. Asn-337 and Asn-385 each carry an N-linked (GlcNAc...) asparagine glycan. The interval 339 to 393 is disordered; that stretch reads TADIGTDPRGPRAPSGPRYPPGSSQAFRQEMLQRRPPARPGPLSTANHTALRGSH.

The protein belongs to the glycosyltransferase 7 family. The cofactor is Mn(2+). Found in various tissues. Highest expression in placenta, prostate, testis, ovary, intestine and muscle, and in fetal brain.

Its subcellular location is the golgi apparatus. It localises to the golgi stack membrane. The catalysed reaction is an N-acetyl-beta-D-glucosaminyl derivative + UDP-alpha-D-galactose = a beta-D-galactosyl-(1-&gt;4)-N-acetyl-beta-D-glucosaminyl derivative + UDP + H(+). It catalyses the reaction N-acetyl-D-glucosamine + UDP-alpha-D-galactose = beta-D-galactosyl-(1-&gt;4)-N-acetyl-D-glucosamine + UDP + H(+). It carries out the reaction a beta-D-GlcNAc-(1-&gt;3)-beta-D-Gal-(1-&gt;4)-beta-D-Glc-(1&lt;-&gt;1)-Cer(d18:1(4E)) + UDP-alpha-D-galactose = a neolactoside nLc4Cer(d18:1(4E)) + UDP + H(+). The enzyme catalyses a beta-D-glucosylceramide + UDP-alpha-D-galactose = a beta-D-galactosyl-(1-&gt;4)-beta-D-glucosyl-(1&lt;-&gt;1)-ceramide + UDP + H(+). The catalysed reaction is a neolactoside IV(3)-beta-GlcNAc-nLc4Cer + UDP-alpha-D-galactose = a neolactoside nLc6Cer + UDP + H(+). It functions in the pathway protein modification; protein glycosylation. Its function is as follows. Responsible for the synthesis of complex-type N-linked oligosaccharides in many glycoproteins as well as the carbohydrate moieties of glycolipids. This chain is Beta-1,4-galactosyltransferase 3, found in Homo sapiens (Human).